Here is a 501-residue protein sequence, read N- to C-terminus: Glutamate--tRNA ligase (501 aa).

The 'HIGH' region signature appears at 11-21 (PSPTGFLHIGN). The 'KMSKS' region signature appears at 257–261 (KLSKR). Lys-260 serves as a coordination point for ATP.

It belongs to the class-I aminoacyl-tRNA synthetase family. Glutamate--tRNA ligase type 1 subfamily. In terms of assembly, monomer.

The protein resides in the cytoplasm. It catalyses the reaction tRNA(Glu) + L-glutamate + ATP = L-glutamyl-tRNA(Glu) + AMP + diphosphate. Its function is as follows. Catalyzes the attachment of glutamate to tRNA(Glu) in a two-step reaction: glutamate is first activated by ATP to form Glu-AMP and then transferred to the acceptor end of tRNA(Glu). The protein is Glutamate--tRNA ligase of Limosilactobacillus reuteri subsp. reuteri (strain JCM 1112) (Lactobacillus reuteri).